Here is an 80-residue protein sequence, read N- to C-terminus: UPF0346 protein LSEI_1394 (80 aa).

The protein belongs to the UPF0346 family.

The protein is UPF0346 protein LSEI_1394 of Lacticaseibacillus paracasei (strain ATCC 334 / BCRC 17002 / CCUG 31169 / CIP 107868 / KCTC 3260 / NRRL B-441) (Lactobacillus paracasei).